The sequence spans 207 residues: UPF0126 inner membrane protein YadS (207 aa).

Residues 1–21 (MLVYWLDIVGTAVFAISGVLL) form a helical membrane-spanning segment. The Cytoplasmic segment spans residues 22–29 (AGKLRMDP). The chain crosses the membrane as a helical span at residues 30–50 (FGVLVLGVVTAVGGGTIRDMA). Residues 51-58 (LDHGPVFW) are Periplasmic-facing. Residues 59–79 (VKDPTDLVVAMVTSMLTIVLV) traverse the membrane as a helical segment. Residues 80-85 (RQPRRL) are Cytoplasmic-facing. Residues 86-106 (PKWMLPVLDAVGLAVFVGIGV) form a helical membrane-spanning segment. At 107 to 112 (NKAFNA) the chain is on the periplasmic side. A helical membrane pass occupies residues 113-133 (EAGPLIAVCMGVITGVGGGII). The Cytoplasmic portion of the chain corresponds to 134-148 (RDVLAREIPMILRTE). A helical membrane pass occupies residues 149-169 (IYATACIIGGIVHATAYYTFS). Residue V170 is a topological domain, periplasmic. A helical transmembrane segment spans residues 171 to 191 (PLETASMMGMVVTLLIRLAAI). Residues 192–207 (RWHLKLPTFALDENGR) are Cytoplasmic-facing.

Belongs to the UPF0126 family.

The protein localises to the cell inner membrane. The polypeptide is UPF0126 inner membrane protein YadS (yadS) (Escherichia coli O6:H1 (strain CFT073 / ATCC 700928 / UPEC)).